A 196-amino-acid polypeptide reads, in one-letter code: Imidazole glycerol phosphate synthase subunit HisH (196 aa).

Positions 2-196 (NVVILDTGCA…AKLLKNFLEM (195 aa)) constitute a Glutamine amidotransferase type-1 domain. The active-site Nucleophile is the cysteine 77. Active-site residues include histidine 178 and glutamate 180.

In terms of assembly, heterodimer of HisH and HisF.

It localises to the cytoplasm. The catalysed reaction is 5-[(5-phospho-1-deoxy-D-ribulos-1-ylimino)methylamino]-1-(5-phospho-beta-D-ribosyl)imidazole-4-carboxamide + L-glutamine = D-erythro-1-(imidazol-4-yl)glycerol 3-phosphate + 5-amino-1-(5-phospho-beta-D-ribosyl)imidazole-4-carboxamide + L-glutamate + H(+). The enzyme catalyses L-glutamine + H2O = L-glutamate + NH4(+). It functions in the pathway amino-acid biosynthesis; L-histidine biosynthesis; L-histidine from 5-phospho-alpha-D-ribose 1-diphosphate: step 5/9. IGPS catalyzes the conversion of PRFAR and glutamine to IGP, AICAR and glutamate. The HisH subunit catalyzes the hydrolysis of glutamine to glutamate and ammonia as part of the synthesis of IGP and AICAR. The resulting ammonia molecule is channeled to the active site of HisF. In Shigella dysenteriae serotype 1 (strain Sd197), this protein is Imidazole glycerol phosphate synthase subunit HisH.